A 335-amino-acid chain; its full sequence is MLP-like protein 28 (335 aa).

Belongs to the MLP family.

Its function is as follows. Can bind steroids (in vitro), and may also bind other types of hydrophobic ligands. The sequence is that of MLP-like protein 28 (MLP28) from Arabidopsis thaliana (Mouse-ear cress).